We begin with the raw amino-acid sequence, 1887 residues long: Nuclear pore membrane glycoprotein 210 (1887 aa).

Positions Met1–Ala26 are cleaved as a signal peptide. Topologically, residues Lys27–Gln1808 are perinuclear space. N-linked (GlcNAc...) asparagine glycans are attached at residues Asn44, Asn337, Asn405, Asn484, Asn681, Asn801, Asn926, Asn1039, Asn1116, Asn1135, Asn1362, and Asn1441. The region spanning Phe1078–Lys1151 is the BIG2 domain. Residues Val1809–His1829 form a helical membrane-spanning segment. Topologically, residues Thr1830–His1887 are cytoplasmic. The residue at position 1844 (Thr1844) is a Phosphothreonine. Positions Pro1853–His1887 are disordered. 4 positions are modified to phosphoserine: Ser1874, Ser1877, Ser1881, and Ser1886.

It belongs to the NUP210 family. Forms dimers and possibly higher-order oligomers. Post-translationally, N-glycosylated, but not all potential glycosylation sites may be used. Contains high-mannose type oligosaccharides. In terms of processing, phosphorylated at Ser-1881 in mitosis specifically; not phosphorylated in interphase. In terms of tissue distribution, ubiquitous expression, with highest levels in lung, liver, pancreas, testis, and ovary, intermediate levels in brain, kidney, and spleen, and lowest levels in heart and skeletal muscle.

Its subcellular location is the nucleus. It is found in the nuclear pore complex. The protein localises to the nucleus membrane. It localises to the endoplasmic reticulum membrane. Its function is as follows. Nucleoporin essential for nuclear pore assembly and fusion, nuclear pore spacing, as well as structural integrity. The sequence is that of Nuclear pore membrane glycoprotein 210 (NUP210) from Homo sapiens (Human).